Reading from the N-terminus, the 641-residue chain is 1-deoxy-D-xylulose-5-phosphate synthase (641 aa).

Thiamine diphosphate is bound by residues His78 and Ala119–Ser121. Mg(2+) is bound at residue Asp150. Thiamine diphosphate is bound by residues Gly151–Ala152, Asn179, Tyr288, and Glu370. Asn179 provides a ligand contact to Mg(2+).

This sequence belongs to the transketolase family. DXPS subfamily. As to quaternary structure, homodimer. Requires Mg(2+) as cofactor. It depends on thiamine diphosphate as a cofactor.

The catalysed reaction is D-glyceraldehyde 3-phosphate + pyruvate + H(+) = 1-deoxy-D-xylulose 5-phosphate + CO2. It participates in metabolic intermediate biosynthesis; 1-deoxy-D-xylulose 5-phosphate biosynthesis; 1-deoxy-D-xylulose 5-phosphate from D-glyceraldehyde 3-phosphate and pyruvate: step 1/1. Functionally, catalyzes the acyloin condensation reaction between C atoms 2 and 3 of pyruvate and glyceraldehyde 3-phosphate to yield 1-deoxy-D-xylulose-5-phosphate (DXP). This chain is 1-deoxy-D-xylulose-5-phosphate synthase, found in Azorhizobium caulinodans (strain ATCC 43989 / DSM 5975 / JCM 20966 / LMG 6465 / NBRC 14845 / NCIMB 13405 / ORS 571).